A 346-amino-acid polypeptide reads, in one-letter code: Methionine import ATP-binding protein MetN (346 aa).

The ABC transporter domain maps to 2–243 (VRFEGISKTY…PKHPITQSFL (242 aa)). 40–47 (GRSGAGKS) lines the ATP pocket.

This sequence belongs to the ABC transporter superfamily. Methionine importer (TC 3.A.1.24) family. The complex is composed of two ATP-binding proteins (MetN), two transmembrane proteins (MetI) and a solute-binding protein (MetQ).

It is found in the cell inner membrane. It carries out the reaction L-methionine(out) + ATP + H2O = L-methionine(in) + ADP + phosphate + H(+). The catalysed reaction is D-methionine(out) + ATP + H2O = D-methionine(in) + ADP + phosphate + H(+). In terms of biological role, part of the ABC transporter complex MetNIQ involved in methionine import. Responsible for energy coupling to the transport system. This chain is Methionine import ATP-binding protein MetN, found in Bradyrhizobium diazoefficiens (strain JCM 10833 / BCRC 13528 / IAM 13628 / NBRC 14792 / USDA 110).